The primary structure comprises 400 residues: Probable RNA polymerase sigma factor RfaY (400 aa).

The Polymerase core binding signature appears at 62-75 (WQRLAQLHQPASFL). Residues 165–184 (SDAAVRKRLSRARATVRNEL) constitute a DNA-binding region (H-T-H motif).

Belongs to the sigma-70 factor family. ECF subfamily.

Its function is as follows. Sigma factors are initiation factors that promote the attachment of RNA polymerase to specific initiation sites and are then released. This sigma factor is involved in lipopolysaccharide biosynthesis and pathogenicity. This is Probable RNA polymerase sigma factor RfaY (rfaY) from Xanthomonas campestris pv. campestris (strain ATCC 33913 / DSM 3586 / NCPPB 528 / LMG 568 / P 25).